The chain runs to 351 residues: Methylthioribose-1-phosphate isomerase (351 aa).

Substrate contacts are provided by residues 55–57 (RGA), arginine 95, and glutamine 202. The Proton donor role is filled by aspartate 243. 253–254 (NK) contributes to the substrate binding site.

Belongs to the eIF-2B alpha/beta/delta subunits family. MtnA subfamily.

The enzyme catalyses 5-(methylsulfanyl)-alpha-D-ribose 1-phosphate = 5-(methylsulfanyl)-D-ribulose 1-phosphate. It participates in amino-acid biosynthesis; L-methionine biosynthesis via salvage pathway; L-methionine from S-methyl-5-thio-alpha-D-ribose 1-phosphate: step 1/6. Functionally, catalyzes the interconversion of methylthioribose-1-phosphate (MTR-1-P) into methylthioribulose-1-phosphate (MTRu-1-P). The chain is Methylthioribose-1-phosphate isomerase from Marinobacter nauticus (strain ATCC 700491 / DSM 11845 / VT8) (Marinobacter aquaeolei).